A 395-amino-acid chain; its full sequence is Immunoglobulin heavy constant gamma 2 (395 aa).

The CH1 stretch occupies residues 1–98 (ASTKGPSVFP…PSNTKVDKTV (98 aa)). Residues 1-346 (ASTKGPSVFP…DGELDGLWTT (346 aa)) are Extracellular-facing. 3 consecutive Ig-like domains span residues 6–99 (PSVF…KTVE), 117–216 (PSVF…KTIS), and 225–321 (PQVY…KSLS). Cysteine 27 and cysteine 83 are disulfide-bonded. Residues 99-110 (ERKCCVECPPCP) form a hinge region. The CH2 stretch occupies residues 111 to 219 (APPVAGPSVF…PIEKTISKTK (109 aa)). Disulfide bonds link cysteine 140–cysteine 200 and cysteine 246–cysteine 304. Asparagine 176 is a glycosylation site (N-linked (GlcNAc...) (complex) asparagine). Positions 220 to 326 (GQPREPQVYT…QKSLSLSPEL (107 aa)) are CH3. A helical transmembrane segment spans residues 347-367 (ITIFITLFLLSVCYSATITFF). Topologically, residues 368-395 (KVKWIFSSVVDLKQTIVPDYRNMIRQGA) are cytoplasmic.

As to quaternary structure, immunoglobulins are composed of two identical heavy chains and two identical light chains; disulfide-linked. Glycosylation on Asn-176 is required for interaction with Fc receptors and ability to activate the complement pathway. Post-translationally, (Microbial infection) Deglycosylation on Asn-176 by S.pyogenes EndoS or Endos2 endoglucosidases prevents interaction between immunoglobulin-gamma (IgG) and Fc receptors, impairing ability to activate the complement pathway.

It localises to the secreted. It is found in the cell membrane. Its function is as follows. Constant region of immunoglobulin heavy chains. Immunoglobulins, also known as antibodies, are membrane-bound or secreted glycoproteins produced by B lymphocytes. In the recognition phase of humoral immunity, the membrane-bound immunoglobulins serve as receptors which, upon binding of a specific antigen, trigger the clonal expansion and differentiation of B lymphocytes into immunoglobulins-secreting plasma cells. Secreted immunoglobulins mediate the effector phase of humoral immunity, which results in the elimination of bound antigens. The antigen binding site is formed by the variable domain of one heavy chain, together with that of its associated light chain. Thus, each immunoglobulin has two antigen binding sites with remarkable affinity for a particular antigen. The variable domains are assembled by a process called V-(D)-J rearrangement and can then be subjected to somatic hypermutations which, after exposure to antigen and selection, allow affinity maturation for a particular antigen. In Homo sapiens (Human), this protein is Immunoglobulin heavy constant gamma 2.